A 345-amino-acid polypeptide reads, in one-letter code: Phosphate acyltransferase (345 aa).

Belongs to the PlsX family. Homodimer. Probably interacts with PlsY.

The protein resides in the cytoplasm. The enzyme catalyses a fatty acyl-[ACP] + phosphate = an acyl phosphate + holo-[ACP]. It functions in the pathway lipid metabolism; phospholipid metabolism. Catalyzes the reversible formation of acyl-phosphate (acyl-PO(4)) from acyl-[acyl-carrier-protein] (acyl-ACP). This enzyme utilizes acyl-ACP as fatty acyl donor, but not acyl-CoA. This Anaplasma phagocytophilum (strain HZ) protein is Phosphate acyltransferase.